The chain runs to 510 residues: 2,3-bisphosphoglycerate-independent phosphoglycerate mutase (510 aa).

Aspartate 15 and serine 65 together coordinate Mn(2+). Serine 65 functions as the Phosphoserine intermediate in the catalytic mechanism. Substrate contacts are provided by residues histidine 126, 155 to 156 (RD), arginine 187, arginine 193, 259 to 262 (RPDR), and lysine 332. The Mn(2+) site is built by aspartate 399, histidine 403, aspartate 440, histidine 441, and histidine 458.

Belongs to the BPG-independent phosphoglycerate mutase family. Mn(2+) serves as cofactor.

It localises to the plastid. It is found in the chloroplast. It carries out the reaction (2R)-2-phosphoglycerate = (2R)-3-phosphoglycerate. It functions in the pathway carbohydrate degradation; glycolysis; pyruvate from D-glyceraldehyde 3-phosphate: step 3/5. Its function is as follows. Catalyzes the interconversion of 2-phosphoglycerate and 3-phosphoglycerate. This is 2,3-bisphosphoglycerate-independent phosphoglycerate mutase from Antithamnion sp. (Red alga).